The following is a 441-amino-acid chain: MNILFSRFSFLLLFLCSWTSFTFTTTEAYDALDPYGNITIKWDIMSWTGDGYVAVVTIFNFQQYRHIEAPGWQLGWSWMKKEVIWSMVGGQATEQGDCSKFKGNIPHCCKKTPAIVDLLPGTPYNQQISNCCRGGVISAWAQDPATAISSFQISVGQSGTTNTTVRAPRNITLKAPGPGYTCGPAKLVKPSRFISADKRRKTQSLLTWNITCTYSQFLARKTPTCCVSLSAFYNETIVPCPTCSCGCQNSSQAGTCVDPKIASVVPALGKNNLEPLLQCTQHMCPIRVHWHVKTSYKEYWRVKVAITNFNYNMNYSQWNLVVQHPNFDNLTKLFSFNYKPLNPYLNINDTAMLWGIKFYNDFLSQAGPVGNVQSELLFQKNPLEFTFEKGWAFPRRIYFNGDNCVMPPPDSYPWLPNASPNIATSPFVILLITFLSVLILM.

The first 28 residues, Met1–Ala28, serve as a signal peptide directing secretion. Residues Asn37, Asn162, Asn170, Asn209, Asn234, Asn249, Asn314, Asn329, and Asn348 are each glycosylated (N-linked (GlcNAc...) asparagine). Asn417 carries the GPI-anchor amidated asparagine lipid modification. Positions Ala418–Met441 are cleaved as a propeptide — removed in mature form.

It belongs to the COBRA family. Expressed in roots, stems, leaves, flowers and siliques.

It localises to the cell membrane. The polypeptide is COBRA-like protein 2 (COBL2) (Arabidopsis thaliana (Mouse-ear cress)).